A 237-amino-acid chain; its full sequence is RNA-binding protein 38 (237 aa).

Positions 1 to 24 (MLLQPACSPSVFPRPSAAPSAMHG) are disordered. The region spanning 32-109 (TKIFVGGLPY…RKANVNLAYL (78 aa)) is the RRM domain.

The protein belongs to the RBM38 family. As to expression, expressed in cardiac and skeletal muscle tissues.

It localises to the cytoplasm. It is found in the cytosol. Its subcellular location is the nucleus. Its function is as follows. RNA-binding protein that specifically bind the 3'-UTR of CDKN1A transcripts, leading to maintain the stability of CDKN1A transcripts, thereby acting as a mediator of the p53/TP53 family to regulate CDKN1A. CDKN1A is a cyclin-dependent kinase inhibitor transcriptionally regulated by the p53/TP53 family to induce cell cycle arrest. Has the ability to induce cell cycle arrest in G1 and maintain the stability of CDKN1A transcripts induced by p53/TP53. Also acts as a mRNA splicing factor. Specifically regulates the expression of FGFR2-IIIb, an epithelial cell-specific isoform of FGFR2. Plays a role in myogenic differentiation. This is RNA-binding protein 38 (Rbm38) from Mus musculus (Mouse).